Reading from the N-terminus, the 303-residue chain is Aspartate carbamoyltransferase catalytic subunit (303 aa).

Arg49 and Thr50 together coordinate carbamoyl phosphate. Lys77 is an L-aspartate binding site. Residues Arg99, His126, and Gln129 each contribute to the carbamoyl phosphate site. L-aspartate-binding residues include Arg159 and Arg211. Positions 252 and 253 each coordinate carbamoyl phosphate.

Belongs to the aspartate/ornithine carbamoyltransferase superfamily. ATCase family. In terms of assembly, heterododecamer (2C3:3R2) of six catalytic PyrB chains organized as two trimers (C3), and six regulatory PyrI chains organized as three dimers (R2).

It carries out the reaction carbamoyl phosphate + L-aspartate = N-carbamoyl-L-aspartate + phosphate + H(+). It functions in the pathway pyrimidine metabolism; UMP biosynthesis via de novo pathway; (S)-dihydroorotate from bicarbonate: step 2/3. Catalyzes the condensation of carbamoyl phosphate and aspartate to form carbamoyl aspartate and inorganic phosphate, the committed step in the de novo pyrimidine nucleotide biosynthesis pathway. The sequence is that of Aspartate carbamoyltransferase catalytic subunit from Listeria innocua serovar 6a (strain ATCC BAA-680 / CLIP 11262).